A 262-amino-acid polypeptide reads, in one-letter code: 1-(5-phosphoribosyl)-5-[(5-phosphoribosylamino)methylideneamino] imidazole-4-carboxamide isomerase (262 aa).

Asp-8 (proton acceptor) is an active-site residue. The active-site Proton donor is Asp-129. The segment at 243-262 is disordered; that stretch reads KDNVGQEDHSLPRCEPGPRG.

This sequence belongs to the HisA/HisF family.

It is found in the cytoplasm. It carries out the reaction 1-(5-phospho-beta-D-ribosyl)-5-[(5-phospho-beta-D-ribosylamino)methylideneamino]imidazole-4-carboxamide = 5-[(5-phospho-1-deoxy-D-ribulos-1-ylimino)methylamino]-1-(5-phospho-beta-D-ribosyl)imidazole-4-carboxamide. The protein operates within amino-acid biosynthesis; L-histidine biosynthesis; L-histidine from 5-phospho-alpha-D-ribose 1-diphosphate: step 4/9. The sequence is that of 1-(5-phosphoribosyl)-5-[(5-phosphoribosylamino)methylideneamino] imidazole-4-carboxamide isomerase from Desulforudis audaxviator (strain MP104C).